The chain runs to 198 residues: NAD(P)H dehydrogenase (quinone) (198 aa).

The region spanning 4-189 (ILVLYYSMYG…SIARYQGEYV (186 aa)) is the Flavodoxin-like domain. FMN is bound by residues 10–15 (SMYGHI) and 78–80 (TRF). An NAD(+)-binding site is contributed by Tyr-12. Substrate is bound at residue Trp-98. FMN-binding positions include 113–118 (STGTGG) and His-133.

The protein belongs to the WrbA family. FMN is required as a cofactor.

It catalyses the reaction a quinone + NADH + H(+) = a quinol + NAD(+). It carries out the reaction a quinone + NADPH + H(+) = a quinol + NADP(+). The sequence is that of NAD(P)H dehydrogenase (quinone) from Salmonella paratyphi B (strain ATCC BAA-1250 / SPB7).